A 413-amino-acid polypeptide reads, in one-letter code: Protein PHR1-LIKE 1 (413 aa).

2 disordered regions span residues 171–196 (SEPNWSELLGDSSSHNPNSEIPTPFL) and 208–233 (QQQMVSSEDQLSGRNSSSSVATSKQR). Composition is skewed to polar residues over residues 181–191 (DSSSHNPNSEI) and 208–231 (QQQMVSSEDQLSGRNSSSSVATSK). Residues 228-288 (ATSKQRMRWT…HLQKYRTARY (61 aa)) enclose the HTH myb-type domain. Positions 259–284 (PKAVLKLLNNPGLTIYHVKSHLQKYR) form a DNA-binding region, H-T-H motif. The segment at 322–342 (TQALRLQMEVQKRLHEQLEIQ) is coiled coil. The LHEQLE motif lies at 335 to 340 (LHEQLE). The interval 363–413 (QQKIQDNKSSSSEASPKQCNGSFAEVEVGLETLTGDQNESASASRKRVRED) is disordered. Composition is skewed to polar residues over residues 369 to 383 (NKSSSSEASPKQCNG) and 396 to 405 (TGDQNESASA).

It belongs to the MYB-CC family. Homodimers and heterodimers. Interacts with MED25. Does not interact with PHL2 or PHL3. In terms of tissue distribution, expressed in shoots and roots.

Its subcellular location is the nucleus. Functionally, transcription factor acting as central integrator of phosphate starvation responses. Regulates FER1 expression upon phosphate starvation, linking iron and phosphate homeostasis. In Arabidopsis thaliana (Mouse-ear cress), this protein is Protein PHR1-LIKE 1 (PHL1).